The primary structure comprises 1035 residues: Cell-division control histidine kinase PdhS (1035 aa).

Residues 1–613 (MSGSYPFIDI…HADGSEEPVD (613 aa)) form an important for polar localization region. A disordered region spans residues 500-533 (QGLANTRAESETPVSETSSIEPVEPTPPVKTRSE). The segment at 614 to 1035 (AHLNAIAWRG…VFPPTRVLAD (422 aa)) is interaction with DivK. The region spanning 659 to 730 (HVEELKTILD…YLHGLSGNGV (72 aa)) is the PAS domain. One can recognise a Histidine kinase domain in the interval 802–1031 (RISHEIRTPL…VVEIVFPPTR (230 aa)). At His-805 the chain carries Phosphohistidine; by autocatalysis.

In terms of assembly, interacts with DivK.

The protein resides in the cytoplasm. It catalyses the reaction ATP + protein L-histidine = ADP + protein N-phospho-L-histidine.. Functions as a polar differentiation marker. Essential protein that, by localizing in the old pole of dividing cells, controls cell division and maturation, probably through control of DivK phosphorylation status and cellular distribution, which in turn regulates CtrA, a transcriptional regulator of the minB operon. The asymmetrical localization of this protein is probably required for cells to enter a new division cycle. The chain is Cell-division control histidine kinase PdhS (pdhS) from Brucella abortus (strain S19).